We begin with the raw amino-acid sequence, 459 residues long: Elongation factor 1-alpha (459 aa).

Gly-2 carries the n,N,N-trimethylglycine modification. Lys-3 carries the N6,N6-dimethyllysine; alternate modification. Lys-3 carries the N6-methyllysine; alternate modification. The 235-residue stretch at 5–239 (KSHINVVVIG…DAIDPPSRPT (235 aa)) folds into the tr-type G domain. The G1 stretch occupies residues 14 to 21 (GHVDSGKS). 14 to 21 (GHVDSGKS) serves as a coordination point for GTP. Lys-30 bears the N6-methyllysine mark. A G2 region spans residues 70 to 74 (GITID). Lys-79 bears the N6,N6,N6-trimethyllysine mark. Positions 91–94 (DAPG) are G3. GTP-binding positions include 91–95 (DAPGH) and 153–156 (NKMD). The segment at 153 to 156 (NKMD) is G4. The G5 stretch occupies residues 192–194 (SGF). An N6,N6-dimethyllysine; alternate modification is found at Lys-315. At Lys-315 the chain carries N6-methyllysine; alternate. An N6-methyllysine modification is found at Lys-389.

This sequence belongs to the TRAFAC class translation factor GTPase superfamily. Classic translation factor GTPase family. EF-Tu/EF-1A subfamily.

The protein localises to the cytoplasm. In terms of biological role, this protein promotes the GTP-dependent binding of aminoacyl-tRNA to the A-site of ribosomes during protein biosynthesis. The protein is Elongation factor 1-alpha (TEF1) of Aureobasidium pullulans (Black yeast).